The primary structure comprises 204 residues: Transcription factor bHLH120 (204 aa).

Disordered regions lie at residues 1-27 (MNPSNNPKKTRHQSHMPQERDETKKEK) and 93-116 (KREIGDPTSLTGSGSGSGSSRSEP). The 53-residue stretch at 26 to 78 (EKKLLHRNIERQRRQEMAILFASLRSQLPLKYIKGKRAMSDHVNGAVSFIKDT) folds into the bHLH domain.

As to quaternary structure, homodimer.

The protein localises to the nucleus. The polypeptide is Transcription factor bHLH120 (BHLH120) (Arabidopsis thaliana (Mouse-ear cress)).